A 462-amino-acid polypeptide reads, in one-letter code: Transcription initiation factor TFIID subunit 7-like (462 aa).

Disordered regions lie at residues 1–97 (MECP…VPDE) and 327–366 (DSRS…SEEY). Low complexity-rich tracts occupy residues 16-30 (STPT…SQQE) and 66-77 (DADSSAQAAAQA). Residues 333–365 (DDDEDEDDEDEDEDEDEDEDEDKEEEEEDCSEE) show a composition bias toward acidic residues. The stretch at 342–462 (DEDEDEDEDE…QEQLQRFLKK (121 aa)) forms a coiled coil.

It belongs to the TAF7 family. In terms of assembly, TFIID is composed of TATA binding protein (TBP) and a number of TBP-associated factors (TAFs). TAF7L may replace TAF7 in a spermatogenesis-specific form of TFIID. Interacts with TBP; the interaction occurs in a sub-population of cells (pachytene and haploid round spermatids) and is developmentally regulated through differential intracellular localization of the two proteins. Interacts with TAF1. As to expression, testis-specific.

Its subcellular location is the nucleus. The protein resides in the cytoplasm. Probably functions as a spermatogenesis-specific component of the DNA-binding general transcription factor complex TFIID, a multimeric protein complex that plays a central role in mediating promoter responses to various activators and repressors. May play a role in spermatogenesis. This is Transcription initiation factor TFIID subunit 7-like (TAF7L) from Homo sapiens (Human).